We begin with the raw amino-acid sequence, 204 residues long: MAETARTAPAVDFVGGAVGYRFRSQAGRSHALLKATGLSPTRSLHVIDATAGLGRDAFLLASMGATVTLIERVPEVHALLAEALEAARAESDELAAIIGRMTLLHGDARVLLPTLQADVITIDPMHPPRTKTALVKQEMRLLRDLVGADPDVGELLAAALSADCGRVVLKWPLRAAAPPAARKPSHQIAGKTVRYDVYVRPRTT.

S-adenosyl-L-methionine-binding positions include 55-56, 71-72, and Asp123; these read RD and ER.

The protein belongs to the methyltransferase superfamily. RsmJ family.

It is found in the cytoplasm. The enzyme catalyses guanosine(1516) in 16S rRNA + S-adenosyl-L-methionine = N(2)-methylguanosine(1516) in 16S rRNA + S-adenosyl-L-homocysteine + H(+). In terms of biological role, specifically methylates the guanosine in position 1516 of 16S rRNA. The protein is Ribosomal RNA small subunit methyltransferase J of Rhodopseudomonas palustris (strain ATCC BAA-98 / CGA009).